The chain runs to 342 residues: MDQFKPFIAKLATGSSLTRAEAEAAFDQIFAGEVTPAQLGGFLMAMRVRGETVDEIIGAVTAMRARMVRVDAPTDAIDIVGTGGDGHGTFNVSTLASLIVAACGVPVAKHGNRAASSRSGASDVLSALGVRTGLDSAGVEACIRGAGIGFMMAQTHHTAMRHVASARVELGTRTIFNLLGPLCNPAGVTRQLLGVFSQAWLEPLAQVLQALGGKHVWVVHGSDGLDELTTTGPSFVTALEDGAIRSFTITPEMAGLPQATLADLKGGDPETNAAALREALGGKKSAYRDIALLNAAAALVIAAKAKDLKEGVLIGAKAVDSGAASAVLAKLVALSNQDNRAA.

5-phospho-alpha-D-ribose 1-diphosphate is bound by residues Gly81, 84-85, Thr89, 91-94, 109-117, and Ala121; these read GD, NVST, and KHGNRAASS. Residue Gly81 coordinates anthranilate. Ser93 serves as a coordination point for Mg(2+). Asn112 serves as a coordination point for anthranilate. Position 167 (Arg167) interacts with anthranilate. Positions 226 and 227 each coordinate Mg(2+).

It belongs to the anthranilate phosphoribosyltransferase family. Homodimer. It depends on Mg(2+) as a cofactor.

It catalyses the reaction N-(5-phospho-beta-D-ribosyl)anthranilate + diphosphate = 5-phospho-alpha-D-ribose 1-diphosphate + anthranilate. The protein operates within amino-acid biosynthesis; L-tryptophan biosynthesis; L-tryptophan from chorismate: step 2/5. In terms of biological role, catalyzes the transfer of the phosphoribosyl group of 5-phosphorylribose-1-pyrophosphate (PRPP) to anthranilate to yield N-(5'-phosphoribosyl)-anthranilate (PRA). In Beijerinckia indica subsp. indica (strain ATCC 9039 / DSM 1715 / NCIMB 8712), this protein is Anthranilate phosphoribosyltransferase.